The chain runs to 58 residues: MAVPKKRTSRSKTRIKKQIWKSQADKMALKALSLAKSVLSGKSKSFSYDVVEKSIDTN.

It belongs to the bacterial ribosomal protein bL32 family.

The protein resides in the plastid. It localises to the chloroplast. This chain is Large ribosomal subunit protein bL32c, found in Chaetosphaeridium globosum (Charophycean green alga).